The primary structure comprises 398 residues: Acetate kinase 1 (398 aa).

N9 is a binding site for Mg(2+). Residue K16 coordinates ATP. Residue R89 coordinates substrate. D146 (proton donor/acceptor) is an active-site residue. ATP-binding positions include 206–210, 281–283, and 329–333; these read HLGNG, DCR, and GIGEN. E384 contacts Mg(2+).

The protein belongs to the acetokinase family. In terms of assembly, homodimer. Requires Mg(2+) as cofactor. It depends on Mn(2+) as a cofactor.

It is found in the cytoplasm. The catalysed reaction is acetate + ATP = acetyl phosphate + ADP. It participates in metabolic intermediate biosynthesis; acetyl-CoA biosynthesis; acetyl-CoA from acetate: step 1/2. Functionally, catalyzes the formation of acetyl phosphate from acetate and ATP. Can also catalyze the reverse reaction. The polypeptide is Acetate kinase 1 (Vibrio cholerae serotype O1 (strain ATCC 39315 / El Tor Inaba N16961)).